We begin with the raw amino-acid sequence, 146 residues long: Small ribosomal subunit protein uS5 (146 aa).

The S5 DRBM domain maps to 8–71 (FEEVIVNIGR…DDAFKNIIDV (64 aa)).

It belongs to the universal ribosomal protein uS5 family. In terms of assembly, part of the 30S ribosomal subunit. Contacts proteins S4 and S8.

Functionally, with S4 and S12 plays an important role in translational accuracy. In terms of biological role, located at the back of the 30S subunit body where it stabilizes the conformation of the head with respect to the body. In Campylobacter hominis (strain ATCC BAA-381 / DSM 21671 / CCUG 45161 / LMG 19568 / NCTC 13146 / CH001A), this protein is Small ribosomal subunit protein uS5.